The following is a 139-amino-acid chain: Thioredoxin-like protein Clot (139 aa).

In terms of domain architecture, Thioredoxin spans 1–136; that stretch reads MTVEKVDATV…LADKVDAVVN (136 aa). Residues cysteine 49 and cysteine 52 each act as nucleophile in the active site. A disulfide bond links cysteine 49 and cysteine 52.

It belongs to the thioredoxin family.

Probable thiol-disulfide oxidoreductase that may participate in various redox reactions. This Oryza sativa subsp. japonica (Rice) protein is Thioredoxin-like protein Clot.